Consider the following 289-residue polypeptide: Ribosomal RNA small subunit methyltransferase A (289 aa).

S-adenosyl-L-methionine-binding residues include N28, L30, G55, E77, D103, and N122.

The protein belongs to the class I-like SAM-binding methyltransferase superfamily. rRNA adenine N(6)-methyltransferase family. RsmA subfamily.

The protein localises to the cytoplasm. It catalyses the reaction adenosine(1518)/adenosine(1519) in 16S rRNA + 4 S-adenosyl-L-methionine = N(6)-dimethyladenosine(1518)/N(6)-dimethyladenosine(1519) in 16S rRNA + 4 S-adenosyl-L-homocysteine + 4 H(+). In terms of biological role, specifically dimethylates two adjacent adenosines (A1518 and A1519) in the loop of a conserved hairpin near the 3'-end of 16S rRNA in the 30S particle. May play a critical role in biogenesis of 30S subunits. In Jannaschia sp. (strain CCS1), this protein is Ribosomal RNA small subunit methyltransferase A.